A 202-amino-acid chain; its full sequence is Large ribosomal subunit protein uL4 (202 aa).

Residues 42–52 are compositionally biased toward polar residues; sequence GTKAQKSRSQV. The segment at 42-70 is disordered; that stretch reads GTKAQKSRSQVSGTTKKSKKQKGGGARHG.

It belongs to the universal ribosomal protein uL4 family. As to quaternary structure, part of the 50S ribosomal subunit.

Functionally, one of the primary rRNA binding proteins, this protein initially binds near the 5'-end of the 23S rRNA. It is important during the early stages of 50S assembly. It makes multiple contacts with different domains of the 23S rRNA in the assembled 50S subunit and ribosome. In terms of biological role, forms part of the polypeptide exit tunnel. This is Large ribosomal subunit protein uL4 from Xylella fastidiosa (strain 9a5c).